Here is a 444-residue protein sequence, read N- to C-terminus: Phosphoglucosamine mutase (444 aa).

S101 serves as the catalytic Phosphoserine intermediate. Positions 101, 240, 242, and 244 each coordinate Mg(2+). Residue S101 is modified to Phosphoserine.

Belongs to the phosphohexose mutase family. It depends on Mg(2+) as a cofactor. In terms of processing, activated by phosphorylation.

It catalyses the reaction alpha-D-glucosamine 1-phosphate = D-glucosamine 6-phosphate. Functionally, catalyzes the conversion of glucosamine-6-phosphate to glucosamine-1-phosphate. The sequence is that of Phosphoglucosamine mutase from Sphingopyxis alaskensis (strain DSM 13593 / LMG 18877 / RB2256) (Sphingomonas alaskensis).